The chain runs to 85 residues: Large ribosomal subunit protein bL27 (85 aa).

The interval 1–20 (MAHKKAAGSSRNGRDSNPKM) is disordered.

Belongs to the bacterial ribosomal protein bL27 family.

The polypeptide is Large ribosomal subunit protein bL27 (Psychrobacter arcticus (strain DSM 17307 / VKM B-2377 / 273-4)).